A 697-amino-acid chain; its full sequence is MTELSKYRNIGIFAHVDAGKTTTTERILKLTGKIHKLGEVHDGESTTDFMVQEAERGITIQSAAVSCFWKDHRFNVIDTPGHVDFTVEVYRSLKVLDGGIAVFCGSGGVEPQSETNWRYANESEVARIIFVNKLDRMGADFLRVVKQTKDVLAANPLVMVLPIGIEDEFKGVVDLLTRKAYVWDDSGIPENFEVQDVPADMVDLVEEYREMLIESAVEQDDDLMEAYMEGEEPSIEDLKRCIRKGTRTMAFFPTFCGSAFKNKGMQLVLDAVVDYLPAPDEVDPQPLTDEEGNETGEYAIVSADESLKALAFKIMDDRFGALTFVRIYAGRLKKGDTILNSATGKTERIGRMCEMYANDRIEIESAEAGDIIAIVGMKNVQTGHTLCDVKHPCTLEAMVFPEPVISIAVAPKDKGGSEKMAIAIGKMIAEDPSFRVETDEDSGETILKGMGELHLDIKVDILKRTYGVELIVGEPQVAYRETITQMVEDQYTHKKQSGGSGQFGKIEYIIRPGEPNSGFVFKSSVVGGNVPKEYWPAVEKGFASMMNTGTIAGFPVLDVEFELTDGAYHAVDSSAIAFEIAAKAAFRQSIAKAKPQLLEPIMKVDVFSPEDNVGDVIGDLNRRRGMIKDQVAGVTGVRVKADVPLSEMFGYIGTLRTMTSGRGQFSMEFSHYSPCPNSVADKVVEQVKERKAAEAKK.

One can recognise a tr-type G domain in the interval 5–280 (SKYRNIGIFA…AVVDYLPAPD (276 aa)). Residues 14 to 21 (AHVDAGKT), 78 to 82 (DTPGH), and 132 to 135 (NKLD) each bind GTP.

It belongs to the TRAFAC class translation factor GTPase superfamily. Classic translation factor GTPase family. EF-G/EF-2 subfamily.

It localises to the cytoplasm. In terms of biological role, catalyzes the GTP-dependent ribosomal translocation step during translation elongation. During this step, the ribosome changes from the pre-translocational (PRE) to the post-translocational (POST) state as the newly formed A-site-bound peptidyl-tRNA and P-site-bound deacylated tRNA move to the P and E sites, respectively. Catalyzes the coordinated movement of the two tRNA molecules, the mRNA and conformational changes in the ribosome. In Shewanella sp. (strain MR-7), this protein is Elongation factor G 2.